A 145-amino-acid chain; its full sequence is Large ribosomal subunit protein uL11 (145 aa).

Belongs to the universal ribosomal protein uL11 family. In terms of assembly, part of the ribosomal stalk of the 50S ribosomal subunit. Interacts with L10 and the large rRNA to form the base of the stalk. L10 forms an elongated spine to which L12 dimers bind in a sequential fashion forming a multimeric L10(L12)X complex. In terms of processing, one or more lysine residues are methylated.

Its function is as follows. Forms part of the ribosomal stalk which helps the ribosome interact with GTP-bound translation factors. This chain is Large ribosomal subunit protein uL11, found in Francisella philomiragia subsp. philomiragia (strain ATCC 25017 / CCUG 19701 / FSC 153 / O#319-036).